Consider the following 1481-residue polypeptide: Cystic fibrosis transmembrane conductance regulator (1481 aa).

Residues 1–77 (MQRSPLEKAS…KLINALRRCF (77 aa)) lie on the Cytoplasmic side of the membrane. A helical transmembrane segment spans residues 78 to 98 (FWRFMFYGIILYLGEVTKAVQ). The ABC transmembrane type-1 1 domain maps to 81–365 (FMFYGIILYL…WAVQTWYDSL (285 aa)). Residues 99–122 (PLLLGRIIASYDPDNKVERSIAIY) are Extracellular-facing. A helical transmembrane segment spans residues 123 to 146 (LGIGLCLLFIVRTLLLHPAIFGLH). Topologically, residues 147 to 195 (HIGMQMRIAMFSLIYKKTLKLSSRVLDKISIGQLVSLLSNNLNKFDEGL) are cytoplasmic. A helical transmembrane segment spans residues 196–216 (ALAHFVWIAPLQVTLLMGLLW). Over 217–222 (ELLQAF) the chain is Extracellular. The chain crosses the membrane as a helical span at residues 223–243 (TFCGLAFLIVLALLQAGLGKM). The Cytoplasmic segment spans residues 244–298 (MMKYRDQRAGKINERLVITSEMIENIQSVKAYCWEEAMEKIIENLRQTELKLTRK). A helical membrane pass occupies residues 299–319 (AAYVRYLNSSAFFFSGFFVVF). Over 320 to 339 (LSVLPYALLKGIILRKIFTT) the chain is Extracellular. A helical transmembrane segment spans residues 340–358 (ISFCIVLRMAVTRQFPWAV). The Cytoplasmic segment spans residues 359-858 (QTWYDSLGAI…YLRYITVHKS (500 aa)). Residues W401, 457-464 (GSTGAGKT), and Q492 each bind ATP. Positions 423–645 (NGDNSLFFSN…RPDFSSKLMG (223 aa)) constitute an ABC transporter 1 domain. The S-palmitoyl cysteine moiety is linked to residue C523. At S548 the chain carries Phosphoserine. The tract at residues 653–831 (TAERRNSIIT…EEINEEDLRD (179 aa)) is disordered R region. Phosphoserine; by PKA is present on residues S659 and S669. Residue S685 is modified to Phosphoserine; by PKC. K687 is covalently cross-linked (Glycyl lysine isopeptide (Lys-Gly) (interchain with G-Cter in ubiquitin)). S699 is modified (phosphoserine; by PKA). A Phosphoserine modification is found at S711. Residue T716 is modified to Phosphothreonine. Phosphoserine; by PKA is present on residues S736 and S767. The residue at position 790 (S790) is a Phosphoserine; by PKC. 2 positions are modified to phosphoserine; by PKA: S795 and S813. A helical transmembrane segment spans residues 859–879 (LMFVLIWCLVVFLVEVAASLV). An ABC transmembrane type-1 2 domain is found at 859 to 1155 (LMFVLIWCLV…AVNSSIDVDS (297 aa)). Topologically, residues 880–918 (VLCLFPKIFFQDKGNSTKSANNSYAVIITSTSSYYIFYI) are extracellular. N894 and N900 each carry an N-linked (GlcNAc...) asparagine glycan. Residues 919–939 (YVGVADTLLALGLFRGLPLVH) traverse the membrane as a discontinuously helical segment. Residues 940 to 990 (TLITVSKTLHHKMLQSVLQAPMSTLNTLKTGGILNRFSKDIAVLDDLLPLT) are Cytoplasmic-facing. The helical transmembrane segment at 991–1011 (IFDFVQLLLIVIGAVVVVSVL) threads the bilayer. Residues 1012–1013 (QP) are Extracellular-facing. Residues 1014–1034 (YIFLATVPVIAAFILLRAYFL) form a helical membrane-spanning segment. At 1035 to 1095 (HTSQQLKQLE…TANWFLYLST (61 aa)) the chain is on the cytoplasmic side. Residues 1096–1116 (LRWFQMRIEMIFVIFFIAVTF) traverse the membrane as a helical segment. Residues 1117–1130 (ISILTTGEGEGRVG) lie on the Extracellular side of the membrane. A helical transmembrane segment spans residues 1131–1151 (IILTLAMNIMGTLQWAVNSSI). At 1152 to 1481 (DVDSLMRSVS…TEEEVQETKL (330 aa)) the chain is on the cytoplasmic side. The 234-residue stretch at 1211–1444 (MTVKDLTAKY…KSLFRQAISP (234 aa)) folds into the ABC transporter 2 domain. Residues Y1220 and 1245-1252 (GRTGSGKS) contribute to the ATP site. Positions 1387-1481 (RTLKQAFANC…TEEEVQETKL (95 aa)) are interaction with GORASP2. Residue C1396 is the site of S-palmitoyl cysteine attachment. The segment at 1453–1481 (HRNSSRQRSRSNIAALKEETEEEVQETKL) is disordered. S1457 is subject to Phosphoserine. The span at 1471–1481 (ETEEEVQETKL) shows a compositional bias: acidic residues. The short motif at 1479–1481 (TKL) is the PDZ-binding element.

Belongs to the ABC transporter superfamily. ABCC family. CFTR transporter (TC 3.A.1.202) subfamily. As to quaternary structure, monomer; does not require oligomerization for channel activity. May form oligomers in the membrane. Interacts with SLC26A3, SLC26A6 and NHERF1. Interacts with SHANK2. Interacts with MYO6. Interacts (via C-terminus) with GOPC (via PDZ domain); this promotes CFTR internalization and thereby decreases channel activity. Interacts with SLC4A7 through NHERF1. Found in a complex with MYO5B and RAB11A. Interacts with ANO1. Interacts with SLC26A8. Interacts with AHCYL1; the interaction increases CFTR activity. Interacts with CSE1L. The core-glycosylated form interacts with GORASP2 (via PDZ GRASP-type 1 domain) in respone to ER stress. Interacts with MARCHF2; the interaction leads to CFTR ubiqtuitination and degradation. Interacts with ADGRG2. In terms of processing, N-glycosylated. Phosphorylated; cAMP treatment promotes phosphorylation and activates the channel. Dephosphorylation decreases the ATPase activity (in vitro). Phosphorylation at PKA sites activates the channel. Phosphorylation at PKC sites enhances the response to phosphorylation by PKA. Phosphorylated by AMPK; this inhibits channel activity. Post-translationally, ubiquitinated, leading to its degradation in the lysosome. Deubiquitination by USP10 in early endosomes enhances its endocytic recycling to the cell membrane. Ubiquitinated by RNF185 during ER stress. Ubiquitinated by MARCHF2.

It localises to the apical cell membrane. The protein resides in the early endosome membrane. The protein localises to the cell membrane. It is found in the recycling endosome membrane. Its subcellular location is the endoplasmic reticulum membrane. It localises to the nucleus. It catalyses the reaction ATP + H2O + closed Cl(-) channel = ADP + phosphate + open Cl(-) channel.. It carries out the reaction chloride(in) = chloride(out). The catalysed reaction is hydrogencarbonate(in) = hydrogencarbonate(out). The enzyme catalyses ATP + H2O = ADP + phosphate + H(+). Epithelial ion channel that plays an important role in the regulation of epithelial ion and water transport and fluid homeostasis. Mediates the transport of chloride ions across the cell membrane. Possesses an intrinsic ATPase activity and utilizes ATP to gate its channel; the passive flow of anions through the channel is gated by cycles of ATP binding and hydrolysis by the ATP-binding domains. The ion channel is also permeable to HCO(3)(-); selectivity depends on the extracellular chloride concentration. Exerts its function also by modulating the activity of other ion channels and transporters. Contributes to the regulation of the pH and the ion content of the epithelial fluid layer. Modulates the activity of the epithelial sodium channel (ENaC) complex, in part by regulating the cell surface expression of the ENaC complex. May regulate bicarbonate secretion and salvage in epithelial cells by regulating the transporter SLC4A7. Can inhibit the chloride channel activity of ANO1. Plays a role in the chloride and bicarbonate homeostasis during sperm epididymal maturation and capacitation. This chain is Cystic fibrosis transmembrane conductance regulator, found in Bos taurus (Bovine).